We begin with the raw amino-acid sequence, 82 residues long: MASLVQLRDAIALSGSADANQLSHQLAMPLPLVEAMLEKLTAMGKIERIEQDNSGCLTGSCKSCPEGKNQCSTVIYQLKNHR.

Iron-sulfur cluster-binding residues include C56, C61, C64, and C71.

The protein belongs to the FeoC family.

May function as a transcriptional regulator that controls feoABC expression. This is Probable [Fe-S]-dependent transcriptional repressor from Yersinia enterocolitica serotype O:8 / biotype 1B (strain NCTC 13174 / 8081).